Here is a 467-residue protein sequence, read N- to C-terminus: Cysteine--tRNA ligase (467 aa).

A Zn(2+)-binding site is contributed by Cys-29. Positions 31-41 (ATVQGEPHIGH) match the 'HIGH' region motif. Zn(2+)-binding residues include Cys-207, His-232, and Glu-236. A 'KMSKS' region motif is present at residues 263–267 (KMSKS). Lys-266 contacts ATP. Residues 446–467 (IDVTDTPNGPEWSLRTARGKAN) form a disordered region.

The protein belongs to the class-I aminoacyl-tRNA synthetase family. In terms of assembly, monomer. Zn(2+) serves as cofactor.

It is found in the cytoplasm. The enzyme catalyses tRNA(Cys) + L-cysteine + ATP = L-cysteinyl-tRNA(Cys) + AMP + diphosphate. The chain is Cysteine--tRNA ligase from Nocardia farcinica (strain IFM 10152).